Here is a 614-residue protein sequence, read N- to C-terminus: Dihydroxy-acid dehydratase (614 aa).

Asp81 is a binding site for Mg(2+). Cys122 lines the [2Fe-2S] cluster pocket. The Mg(2+) site is built by Asp123 and Lys124. The residue at position 124 (Lys124) is an N6-carboxylysine. Cys195 lines the [2Fe-2S] cluster pocket. Residue Glu491 coordinates Mg(2+). Catalysis depends on Ser517, which acts as the Proton acceptor.

The protein belongs to the IlvD/Edd family. As to quaternary structure, homodimer. Requires [2Fe-2S] cluster as cofactor. Mg(2+) serves as cofactor.

It carries out the reaction (2R)-2,3-dihydroxy-3-methylbutanoate = 3-methyl-2-oxobutanoate + H2O. It catalyses the reaction (2R,3R)-2,3-dihydroxy-3-methylpentanoate = (S)-3-methyl-2-oxopentanoate + H2O. It functions in the pathway amino-acid biosynthesis; L-isoleucine biosynthesis; L-isoleucine from 2-oxobutanoate: step 3/4. Its pathway is amino-acid biosynthesis; L-valine biosynthesis; L-valine from pyruvate: step 3/4. In terms of biological role, functions in the biosynthesis of branched-chain amino acids. Catalyzes the dehydration of (2R,3R)-2,3-dihydroxy-3-methylpentanoate (2,3-dihydroxy-3-methylvalerate) into 2-oxo-3-methylpentanoate (2-oxo-3-methylvalerate) and of (2R)-2,3-dihydroxy-3-methylbutanoate (2,3-dihydroxyisovalerate) into 2-oxo-3-methylbutanoate (2-oxoisovalerate), the penultimate precursor to L-isoleucine and L-valine, respectively. The polypeptide is Dihydroxy-acid dehydratase (Actinobacillus succinogenes (strain ATCC 55618 / DSM 22257 / CCUG 43843 / 130Z)).